The sequence spans 309 residues: Ribosomal RNA small subunit methyltransferase H (309 aa).

Residues 34-36 (GGH), D54, F80, D102, and Q109 contribute to the S-adenosyl-L-methionine site.

Belongs to the methyltransferase superfamily. RsmH family.

Its subcellular location is the cytoplasm. It catalyses the reaction cytidine(1402) in 16S rRNA + S-adenosyl-L-methionine = N(4)-methylcytidine(1402) in 16S rRNA + S-adenosyl-L-homocysteine + H(+). In terms of biological role, specifically methylates the N4 position of cytidine in position 1402 (C1402) of 16S rRNA. The polypeptide is Ribosomal RNA small subunit methyltransferase H (Cellvibrio japonicus (strain Ueda107) (Pseudomonas fluorescens subsp. cellulosa)).